Consider the following 470-residue polypeptide: 6-phospho-beta-galactosidase (470 aa).

D-galactose 6-phosphate contacts are provided by Gln19, His116, Asn159, Glu160, and Asn297. Glu160 functions as the Proton donor in the catalytic mechanism. The active-site Nucleophile is Glu375. 4 residues coordinate D-galactose 6-phosphate: Ser430, Trp431, Lys437, and Tyr439.

Belongs to the glycosyl hydrolase 1 family.

The enzyme catalyses a 6-phospho-beta-D-galactoside + H2O = D-galactose 6-phosphate + an alcohol. It functions in the pathway carbohydrate metabolism; lactose degradation; D-galactose 6-phosphate and beta-D-glucose from lactose 6-phosphate: step 1/1. This is 6-phospho-beta-galactosidase from Staphylococcus aureus (strain USA300).